We begin with the raw amino-acid sequence, 291 residues long: Tyrosine recombinase XerD (291 aa).

The Core-binding (CB) domain occupies 1–82 (MEEGLIDRLL…ACKRLYIWME (82 aa)). The region spanning 103-285 (NIPTLITEQQ…ANVWLQGVVK (183 aa)) is the Tyr recombinase domain. Active-site residues include R143, K167, H237, R240, and H263. The O-(3'-phospho-DNA)-tyrosine intermediate role is filled by Y272.

Belongs to the 'phage' integrase family. XerD subfamily. In terms of assembly, forms a cyclic heterotetrameric complex composed of two molecules of XerC and two molecules of XerD.

It localises to the cytoplasm. Functionally, site-specific tyrosine recombinase, which acts by catalyzing the cutting and rejoining of the recombining DNA molecules. The XerC-XerD complex is essential to convert dimers of the bacterial chromosome into monomers to permit their segregation at cell division. It also contributes to the segregational stability of plasmids. In Neisseria meningitidis serogroup B (strain ATCC BAA-335 / MC58), this protein is Tyrosine recombinase XerD.